Consider the following 682-residue polypeptide: Potassium-transporting ATPase ATP-binding subunit (682 aa).

4 helical membrane passes run 34–54, 62–82, 219–239, and 254–274; these read PVMFIVWIGSVVTTALAVAMA, AGFTGTISVWLWFTVLFANVA, IALTILLVALTIVFLLATATL, and VLVALLVCLIPTTIGGLLSAI. The 4-aspartylphosphate intermediate role is filled by D307. ATP contacts are provided by residues D344, E348, 377–384, and K395; that span reads FTAQTRMS. Mg(2+) is bound by residues D518 and D522. The next 3 helical transmembrane spans lie at 588–608, 616–636, and 662–682; these read FAIIPAAFAATYPQLNALNVM, AILSAVIFNALIIVFLIPLAL, and LVVPFIGIKIIDMLLTVFGLV.

The protein belongs to the cation transport ATPase (P-type) (TC 3.A.3) family. Type IA subfamily. The system is composed of three essential subunits: KdpA, KdpB and KdpC.

The protein localises to the cell inner membrane. It carries out the reaction K(+)(out) + ATP + H2O = K(+)(in) + ADP + phosphate + H(+). In terms of biological role, part of the high-affinity ATP-driven potassium transport (or Kdp) system, which catalyzes the hydrolysis of ATP coupled with the electrogenic transport of potassium into the cytoplasm. This subunit is responsible for energy coupling to the transport system and for the release of the potassium ions to the cytoplasm. This Enterobacter sp. (strain 638) protein is Potassium-transporting ATPase ATP-binding subunit.